The chain runs to 62 residues: Large ribosomal subunit protein uL30 (62 aa).

This sequence belongs to the universal ribosomal protein uL30 family. Part of the 50S ribosomal subunit.

In Heliobacterium modesticaldum (strain ATCC 51547 / Ice1), this protein is Large ribosomal subunit protein uL30.